Here is a 356-residue protein sequence, read N- to C-terminus: Altered inheritance of mitochondria protein 23, mitochondrial (356 aa).

Residues 1–32 constitute a mitochondrion transit peptide; it reads MLKVPLSDVLSQKMLFLKSFRYFHCTKYFSRD.

It belongs to the AIM23 family.

It localises to the mitochondrion. This is Altered inheritance of mitochondria protein 23, mitochondrial (AIM23) from Saccharomyces cerevisiae (strain ATCC 204508 / S288c) (Baker's yeast).